Reading from the N-terminus, the 408-residue chain is tRNA-specific 2-thiouridylase MnmA (408 aa).

ATP is bound by residues 20–27 (AMSGGVDS) and L46. C114 acts as the Nucleophile in catalysis. C114 and C210 are joined by a disulfide. Position 138 (G138) interacts with ATP. Residues 160–162 (RDQ) are interaction with tRNA. Residue C210 is the Cysteine persulfide intermediate of the active site.

Belongs to the MnmA/TRMU family.

The protein localises to the cytoplasm. The enzyme catalyses S-sulfanyl-L-cysteinyl-[protein] + uridine(34) in tRNA + AH2 + ATP = 2-thiouridine(34) in tRNA + L-cysteinyl-[protein] + A + AMP + diphosphate + H(+). Its function is as follows. Catalyzes the 2-thiolation of uridine at the wobble position (U34) of tRNA, leading to the formation of s(2)U34. In Bartonella quintana (strain Toulouse) (Rochalimaea quintana), this protein is tRNA-specific 2-thiouridylase MnmA.